A 103-amino-acid polypeptide reads, in one-letter code: Small ribosomal subunit protein uS10 (103 aa).

This sequence belongs to the universal ribosomal protein uS10 family. Part of the 30S ribosomal subunit.

In terms of biological role, involved in the binding of tRNA to the ribosomes. The polypeptide is Small ribosomal subunit protein uS10 (Borrelia recurrentis (strain A1)).